We begin with the raw amino-acid sequence, 347 residues long: UPF0284 protein M164_0030 (347 aa).

The protein belongs to the UPF0284 family.

The protein is UPF0284 protein M164_0030 of Saccharolobus islandicus (strain M.16.4 / Kamchatka #3) (Sulfolobus islandicus).